The chain runs to 179 residues: Large ribosomal subunit protein uL6 (179 aa).

The tract at residues 151–179 (RKPEPYKGKGIKYDNEQIRRKAGKSGGKK) is disordered. Residues 152–169 (KPEPYKGKGIKYDNEQIR) are compositionally biased toward basic and acidic residues. The segment covering 170-179 (RKAGKSGGKK) has biased composition (basic residues).

This sequence belongs to the universal ribosomal protein uL6 family. As to quaternary structure, part of the 50S ribosomal subunit.

This protein binds to the 23S rRNA, and is important in its secondary structure. It is located near the subunit interface in the base of the L7/L12 stalk, and near the tRNA binding site of the peptidyltransferase center. The protein is Large ribosomal subunit protein uL6 of Nitratidesulfovibrio vulgaris (strain ATCC 29579 / DSM 644 / CCUG 34227 / NCIMB 8303 / VKM B-1760 / Hildenborough) (Desulfovibrio vulgaris).